Here is a 275-residue protein sequence, read N- to C-terminus: Phosphonoacetaldehyde hydrolase (275 aa).

D15 (nucleophile) is an active-site residue. Residues D15 and A17 each contribute to the Mg(2+) site. The active-site Schiff-base intermediate with substrate is K56. D189 is a Mg(2+) binding site.

This sequence belongs to the HAD-like hydrolase superfamily. PhnX family. As to quaternary structure, homodimer. It depends on Mg(2+) as a cofactor.

It catalyses the reaction phosphonoacetaldehyde + H2O = acetaldehyde + phosphate + H(+). Functionally, involved in phosphonate degradation. This is Phosphonoacetaldehyde hydrolase from Pseudomonas putida (Arthrobacter siderocapsulatus).